Reading from the N-terminus, the 509-residue chain is tRNA-2-methylthio-N(6)-dimethylallyladenosine synthase (509 aa).

Polar residues predominate over residues 1–15; the sequence is MNEQQRLASQQANAS. Residues 1-22 form a disordered region; sequence MNEQQRLASQQANASTKKEEKD. One can recognise an MTTase N-terminal domain in the interval 66 to 184; the sequence is RKFYIRTYGC…LPYILKDAMF (119 aa). [4Fe-4S] cluster contacts are provided by cysteine 75, cysteine 111, cysteine 145, cysteine 221, cysteine 225, and cysteine 228. The Radical SAM core domain maps to 207 to 437; that stretch reads RRGDIKAWVN…NELVNEFSAK (231 aa). The TRAM domain maps to 440–503; the sequence is KKYEGQIVEV…TWSLNGELVE (64 aa).

It belongs to the methylthiotransferase family. MiaB subfamily. As to quaternary structure, monomer. It depends on [4Fe-4S] cluster as a cofactor.

The protein resides in the cytoplasm. The catalysed reaction is N(6)-dimethylallyladenosine(37) in tRNA + (sulfur carrier)-SH + AH2 + 2 S-adenosyl-L-methionine = 2-methylsulfanyl-N(6)-dimethylallyladenosine(37) in tRNA + (sulfur carrier)-H + 5'-deoxyadenosine + L-methionine + A + S-adenosyl-L-homocysteine + 2 H(+). In terms of biological role, catalyzes the methylthiolation of N6-(dimethylallyl)adenosine (i(6)A), leading to the formation of 2-methylthio-N6-(dimethylallyl)adenosine (ms(2)i(6)A) at position 37 in tRNAs that read codons beginning with uridine. This chain is tRNA-2-methylthio-N(6)-dimethylallyladenosine synthase, found in Bacillus cytotoxicus (strain DSM 22905 / CIP 110041 / 391-98 / NVH 391-98).